Consider the following 350-residue polypeptide: Hydroxymethylglutaryl-CoA synthase (350 aa).

Positions 33 and 34 each coordinate (3S)-3-hydroxy-3-methylglutaryl-CoA. Catalysis depends on glutamate 85, which acts as the Proton donor/acceptor. Cysteine 117 and threonine 158 together coordinate (3S)-3-hydroxy-3-methylglutaryl-CoA. Cysteine 117 serves as the catalytic Acyl-thioester intermediate. Arginine 204 contributes to the CoA binding site. (3S)-3-hydroxy-3-methylglutaryl-CoA contacts are provided by threonine 206 and histidine 239. Histidine 239 serves as the catalytic Proton donor/acceptor. CoA is bound at residue lysine 244. Residues lysine 248, asparagine 271, and serine 301 each contribute to the (3S)-3-hydroxy-3-methylglutaryl-CoA site.

This sequence belongs to the thiolase-like superfamily. Archaeal HMG-CoA synthase family. As to quaternary structure, interacts with acetoacetyl-CoA thiolase that catalyzes the precedent step in the pathway and with a DUF35 protein. The acetoacetyl-CoA thiolase/HMG-CoA synthase complex channels the intermediate via a fused CoA-binding site, which allows for efficient coupling of the endergonic thiolase reaction with the exergonic HMGCS reaction.

The enzyme catalyses acetoacetyl-CoA + acetyl-CoA + H2O = (3S)-3-hydroxy-3-methylglutaryl-CoA + CoA + H(+). The protein operates within metabolic intermediate biosynthesis; (R)-mevalonate biosynthesis; (R)-mevalonate from acetyl-CoA: step 2/3. In terms of biological role, catalyzes the condensation of acetyl-CoA with acetoacetyl-CoA to form 3-hydroxy-3-methylglutaryl-CoA (HMG-CoA). Functions in the mevalonate (MVA) pathway leading to isopentenyl diphosphate (IPP), a key precursor for the biosynthesis of isoprenoid compounds that are building blocks of archaeal membrane lipids. In Methanopyrus kandleri (strain AV19 / DSM 6324 / JCM 9639 / NBRC 100938), this protein is Hydroxymethylglutaryl-CoA synthase.